Reading from the N-terminus, the 760-residue chain is 5-methyltetrahydropteroyltriglutamate--homocysteine methyltransferase (760 aa).

5-methyltetrahydropteroyltri-L-glutamate-binding positions include 17–20 (RELK) and Lys118. L-homocysteine is bound by residues 434 to 436 (IGS) and Glu487. Residues 434–436 (IGS) and Glu487 contribute to the L-methionine site. 5-methyltetrahydropteroyltri-L-glutamate-binding positions include 518 to 519 (RC) and Trp564. L-homocysteine is bound at residue Asp602. Asp602 is a binding site for L-methionine. Glu608 provides a ligand contact to 5-methyltetrahydropteroyltri-L-glutamate. Residues His644, Cys646, and Glu668 each contribute to the Zn(2+) site. His697 (proton donor) is an active-site residue. Cys729 contributes to the Zn(2+) binding site.

Belongs to the vitamin-B12 independent methionine synthase family. Zn(2+) is required as a cofactor.

It carries out the reaction 5-methyltetrahydropteroyltri-L-glutamate + L-homocysteine = tetrahydropteroyltri-L-glutamate + L-methionine. Its pathway is amino-acid biosynthesis; L-methionine biosynthesis via de novo pathway; L-methionine from L-homocysteine (MetE route): step 1/1. Its function is as follows. Catalyzes the transfer of a methyl group from 5-methyltetrahydrofolate to homocysteine resulting in methionine formation. The chain is 5-methyltetrahydropteroyltriglutamate--homocysteine methyltransferase from Buchnera aphidicola subsp. Cinara cedri (strain Cc).